The primary structure comprises 109 residues: Large ribosomal subunit protein uL22 (109 aa).

The protein belongs to the universal ribosomal protein uL22 family. Part of the 50S ribosomal subunit.

This protein binds specifically to 23S rRNA; its binding is stimulated by other ribosomal proteins, e.g. L4, L17, and L20. It is important during the early stages of 50S assembly. It makes multiple contacts with different domains of the 23S rRNA in the assembled 50S subunit and ribosome. Its function is as follows. The globular domain of the protein is located near the polypeptide exit tunnel on the outside of the subunit, while an extended beta-hairpin is found that lines the wall of the exit tunnel in the center of the 70S ribosome. In Psychrobacter cryohalolentis (strain ATCC BAA-1226 / DSM 17306 / VKM B-2378 / K5), this protein is Large ribosomal subunit protein uL22.